Reading from the N-terminus, the 522-residue chain is Amine oxidase [flavin-containing] (522 aa).

At 1 to 492 (MTAQNTFDVI…FWERNLPSVG (492 aa)) the chain is on the cytoplasmic side. C399 carries the post-translational modification S-8alpha-FAD cysteine. The helical; Anchor for type IV membrane protein transmembrane segment at 493–513 (GFINFLAASVLSVATAAGMLA) threads the bilayer. Residues 514 to 522 (YQKGLLTRS) are Mitochondrial intermembrane-facing.

This sequence belongs to the flavin monoamine oxidase family. It depends on FAD as a cofactor.

It is found in the mitochondrion outer membrane. It carries out the reaction a secondary aliphatic amine + O2 + H2O = a primary amine + an aldehyde + H2O2. Functionally, catalyzes the oxidative deamination of biogenic and xenobiotic amines and has important functions in the metabolism of neuroactive and vasoactive amines in the central nervous system and peripheral tissues. Oxidizes both 5-hydroxytryptamine (5-HT) and beta-phenylethylamine (PEA). The sequence is that of Amine oxidase [flavin-containing] (mao) from Oncorhynchus mykiss (Rainbow trout).